A 139-amino-acid chain; its full sequence is Protein Turandot B (139 aa).

Positions 1–21 (MNFKTALICFALLLIGTLCSA) are cleaved as a signal peptide.

It belongs to the Turandot family.

The protein localises to the secreted. Its function is as follows. A humoral factor that may play a role in stress tolerance. This is Protein Turandot B from Drosophila simulans (Fruit fly).